Here is a 201-residue protein sequence, read N- to C-terminus: CMRF35-like molecule 7 (201 aa).

The N-terminal stretch at 1–17 (MWLPPALLLLSLSGCFS) is a signal peptide. The region spanning 18-120 (IQGPESVRAP…PDLGTQVKVI (103 aa)) is the Ig-like V-type domain. At 18 to 151 (IQGPESVRAP…FIGSHKRNHY (134 aa)) the chain is on the extracellular side. C36 and C104 are oxidised to a cystine. The chain crosses the membrane as a helical span at residues 152–172 (MLLVFVKVPILLILVTAILWL). Over 173 to 201 (KGSQRVPEEPGEQPIYMNFSEPLTKDMAT) the chain is Cytoplasmic. At Y188 the chain carries Phosphotyrosine; by FYN.

This sequence belongs to the CD300 family. As to quaternary structure, interacts with TYROBP, which enhances cell surface expression and activation properties. Interacts with GRB2 in the presence of FYN. Post-translationally, phosphorylation on Tyr-188 by FYN is required for interaction with GRB2. In terms of tissue distribution, expressed exclusively in myeloid lineages.

Its subcellular location is the cell membrane. Its function is as follows. Acts as an activating immune receptor through its interaction with ITAM-bearing adapter TYROBP, and also independently by recruitment of GRB2. In Homo sapiens (Human), this protein is CMRF35-like molecule 7 (CD300LB).